The primary structure comprises 1320 residues: Mediator of RNA polymerase II transcription subunit 15 (1320 aa).

Positions 235–244 (QQASLNQLTP) are enriched in polar residues. Disordered regions lie at residues 235 to 283 (QQAS…KPQQ), 372 to 398 (KNMM…PQQA), 540 to 688 (QLQQ…QQQT), 702 to 791 (QTQQ…PTEQ), and 1233 to 1270 (DSSS…DSKK). Composition is skewed to low complexity over residues 245–283 (QQRA…KPQQ), 375–398 (MAQQ…PQQA), and 540–554 (QLQQ…HTQL). The segment covering 555–587 (ADSFSQRQFTSPTLAKPSANVSTIAQQQTQPTA) has biased composition (polar residues). 3 stretches are compositionally biased toward low complexity: residues 588–624 (LSQS…QQQQ), 634–688 (QQQT…QQQT), and 702–780 (QTQQ…PQQT).

The protein belongs to the Mediator complex subunit 15 family. As to quaternary structure, component of the Mediator complex.

The protein localises to the nucleus. In terms of biological role, component of the Mediator complex, a coactivator involved in regulated gene transcription of nearly all RNA polymerase II-dependent genes. Mediator functions as a bridge to convey information from gene-specific regulatory proteins to the basal RNA polymerase II transcription machinery. Mediator is recruited to promoters by direct interactions with regulatory proteins and serves as a scaffold for the assembly of a functional preinitiation complex with RNA polymerase II and the general transcription factors. The polypeptide is Mediator of RNA polymerase II transcription subunit 15 (GAL11) (Eremothecium gossypii (strain ATCC 10895 / CBS 109.51 / FGSC 9923 / NRRL Y-1056) (Yeast)).